A 532-amino-acid polypeptide reads, in one-letter code: Neutral amino acid transporter A (532 aa).

M1 bears the N-acetylmethionine mark. Polar residues predominate over residues 1–10 (MEKSNETNGY). A disordered region spans residues 1-25 (MEKSNETNGYLDSAQAGPAAGPGAP). Topologically, residues 1-41 (MEKSNETNGYLDSAQAGPAAGPGAPGTAAGRARRCAGFLRR) are cytoplasmic. The span at 14–25 (AQAGPAAGPGAP) shows a compositional bias: low complexity. 3 consecutive transmembrane segments (helical) span residues 42 to 62 (QALV…GAAL), 88 to 108 (MIIL…LDAS), and 119 to 139 (AYFG…AFII). Residues 140–216 (KPGSGAQTLQ…VTHEKIPIGT (77 aa)) are Extracellular-facing. 2 N-linked (GlcNAc...) asparagine glycosylation sites follow: N201 and N206. Helical transmembrane passes span 217–237 (EIEG…GVAL), 257–277 (ATMV…MFLV), 298–318 (IFAS…LIYF), 328–348 (FLLG…SSAT), 373–393 (IGAT…AVFI), and 418–438 (VGAA…LEAI). The interval 500 to 532 (CKSEEETSPLVTHQNPAGPVASAPELESKESVL) is disordered. Phosphoserine occurs at positions 507, 527, and 530.

The protein belongs to the dicarboxylate/amino acid:cation symporter (DAACS) (TC 2.A.23) family. SLC1A4 subfamily. In terms of tissue distribution, expressed mostly in brain, muscle, and pancreas but detected in all tissues examined.

The protein localises to the membrane. It is found in the melanosome. It catalyses the reaction L-threonine(in) + Na(+)(in) = L-threonine(out) + Na(+)(out). The catalysed reaction is L-serine(in) + Na(+)(in) = L-serine(out) + Na(+)(out). It carries out the reaction L-cysteine(in) + Na(+)(in) = L-cysteine(out) + Na(+)(out). The enzyme catalyses L-alanine(in) + Na(+)(in) = L-alanine(out) + Na(+)(out). It catalyses the reaction L-proline(in) + Na(+)(in) = L-proline(out) + Na(+)(out). The catalysed reaction is 4-hydroxy-L-proline(in) + Na(+)(in) = 4-hydroxy-L-proline(out) + Na(+)(out). In terms of biological role, sodium-dependent neutral amino-acid transporter that mediates transport of alanine, serine, cysteine, proline, hydroxyproline and threonine. This Homo sapiens (Human) protein is Neutral amino acid transporter A.